A 241-amino-acid chain; its full sequence is Phosphoadenosine 5'-phosphosulfate reductase (241 aa).

Residue C235 is the Nucleophile; cysteine thiosulfonate intermediate of the active site.

It belongs to the PAPS reductase family. CysH subfamily.

The protein resides in the cytoplasm. It catalyses the reaction [thioredoxin]-disulfide + sulfite + adenosine 3',5'-bisphosphate + 2 H(+) = [thioredoxin]-dithiol + 3'-phosphoadenylyl sulfate. Its pathway is sulfur metabolism; hydrogen sulfide biosynthesis; sulfite from sulfate: step 3/3. Functionally, catalyzes the formation of sulfite from phosphoadenosine 5'-phosphosulfate (PAPS) using thioredoxin as an electron donor. The protein is Phosphoadenosine 5'-phosphosulfate reductase of Xanthomonas oryzae pv. oryzae (strain MAFF 311018).